A 359-amino-acid chain; its full sequence is 2-amino-3-carboxymuconate-6-semialdehyde decarboxylase (359 aa).

A compositionally biased stretch (low complexity) spans M1 to T13. The disordered stretch occupies residues M1–K21. 2 residues coordinate Zn(2+): H29 and H31. Residue R70 coordinates substrate. Zn(2+) is bound by residues H197 and D314.

This sequence belongs to the metallo-dependent hydrolases superfamily. ACMSD family. As to quaternary structure, monomer.

It carries out the reaction 2-amino-3-carboxymuconate 6-semialdehyde + H(+) = 2-aminomuconate 6-semialdehyde + CO2. The protein operates within secondary metabolite metabolism; quinolate metabolism. In terms of biological role, converts alpha-amino-beta-carboxymuconate-epsilon-semialdehyde (ACMS) to alpha-aminomuconate semialdehyde (AMS). This Dictyostelium discoideum (Social amoeba) protein is 2-amino-3-carboxymuconate-6-semialdehyde decarboxylase (acmsd).